The chain runs to 323 residues: CYFIP-related Rac1 interactor A (323 aa).

Belongs to the CYRI family. Interacts with RAC1 (GTP-bound form preferentially).

The protein resides in the membrane. Functionally, may negatively regulate RAC1 signaling and RAC1-driven cytoskeletal remodeling. May regulate chemotaxis, cell migration and epithelial polarization by controlling the polarity, plasticity, duration and extent of protrusions. The polypeptide is CYFIP-related Rac1 interactor A (CYRIA) (Bos taurus (Bovine)).